The primary structure comprises 198 residues: MEHYISLLVRAVFVENMALAFFLGMCTFLAVSKKVSTAFGLGIAVTVVLGISVPANNLVYNLVLRDGALVEGVDLSFLNFITFIGVIAAIVQVLEMILDRYFPALYNALGIFLPLITVNCAIFGGVSFMAQRDYNFPESIVYGFGSGMGWMLAIVALAGIREKMKYANVPAGLQGLGITFISTGLMALGFMSFAGVNL.

Transmembrane regions (helical) follow at residues 11-31 (AVFV…FLAV), 35-55 (VSTA…SVPA), 77-97 (FLNF…LEMI), 109-129 (LGIF…VSFM), 140-160 (IVYG…LAGI), and 176-196 (LGIT…FAGV).

Belongs to the NqrDE/RnfAE family. Composed of six subunits; NqrA, NqrB, NqrC, NqrD, NqrE and NqrF.

It localises to the cell inner membrane. The catalysed reaction is a ubiquinone + n Na(+)(in) + NADH + H(+) = a ubiquinol + n Na(+)(out) + NAD(+). NQR complex catalyzes the reduction of ubiquinone-1 to ubiquinol by two successive reactions, coupled with the transport of Na(+) ions from the cytoplasm to the periplasm. NqrA to NqrE are probably involved in the second step, the conversion of ubisemiquinone to ubiquinol. This Yersinia pestis bv. Antiqua (strain Nepal516) protein is Na(+)-translocating NADH-quinone reductase subunit E.